We begin with the raw amino-acid sequence, 91 residues long: Potassium channel toxin MeuTXK-beta-2 (91 aa).

The signal sequence occupies residues 1–19 (MQRNLVVLLFLGMVALSSC). The BetaSPN-type CS-alpha/beta domain maps to 54-91 (QFGCSAYQGYCDDHCQDIEKKEGFCHGFKCKCGIPMGF). 3 disulfides stabilise this stretch: C57-C78, C64-C83, and C68-C85.

The protein belongs to the long chain scorpion toxin family. Class 1 subfamily. Expressed by the venom gland.

It is found in the secreted. In terms of biological role, has a low affinity binding to potassium channels of rat brain synaptosomes. Displays weak antibacterial activity against Stenotrophomonas sp. Strongly inhibits the development of the Plasmodium berghei ookinetes. Displays slight hemolytic effect on mouse erythrocytes. Induces cytolysis on Xenopus oocytes at high concentrations. Is not toxic towards mice and towards the insect Tenebrio molitor. This is Potassium channel toxin MeuTXK-beta-2 from Mesobuthus eupeus (Lesser Asian scorpion).